The sequence spans 901 residues: HTH-type transcriptional regulator MalT (901 aa).

An ATP-binding site is contributed by 39–46 (SPAGYGKT). In terms of domain architecture, HTH luxR-type spans 829–894 (ELIRTSPLTQ…DAVQHAQQLL (66 aa)). The H-T-H motif DNA-binding region spans 853–872 (NEQIAGELAVAATTIKTHIR).

Belongs to the MalT family. In terms of assembly, monomer in solution. Oligomerizes to an active state in the presence of the positive effectors ATP and maltotriose.

Its activity is regulated as follows. Activated by ATP and maltotriose, which are both required for DNA binding. In terms of biological role, positively regulates the transcription of the maltose regulon whose gene products are responsible for uptake and catabolism of malto-oligosaccharides. Specifically binds to the promoter region of its target genes, recognizing a short DNA motif called the MalT box. The protein is HTH-type transcriptional regulator MalT of Salmonella typhi.